The primary structure comprises 112 residues: MAYRKLGRNTGHRGSMLRNLATSLLKHERIQTTEARAKEVNAIAEKMITLGKQGDLAARRNALTYLLEEDVVTKLFTEIAPKYADRQGGYTRVIKVGPRRGDAAEMVLIELV.

Belongs to the bacterial ribosomal protein bL17 family. As to quaternary structure, part of the 50S ribosomal subunit. Contacts protein L32.

In Desulfitobacterium hafniense (strain DSM 10664 / DCB-2), this protein is Large ribosomal subunit protein bL17.